The sequence spans 433 residues: Enolase (433 aa).

Q167 provides a ligand contact to (2R)-2-phosphoglycerate. Catalysis depends on E209, which acts as the Proton donor. Mg(2+) contacts are provided by D246, E291, and D318. Residues K343, R372, S373, and K394 each contribute to the (2R)-2-phosphoglycerate site. K343 (proton acceptor) is an active-site residue.

The protein belongs to the enolase family. In terms of assembly, component of the RNA degradosome, a multiprotein complex involved in RNA processing and mRNA degradation. It depends on Mg(2+) as a cofactor.

Its subcellular location is the cytoplasm. It is found in the secreted. The protein localises to the cell surface. The enzyme catalyses (2R)-2-phosphoglycerate = phosphoenolpyruvate + H2O. It participates in carbohydrate degradation; glycolysis; pyruvate from D-glyceraldehyde 3-phosphate: step 4/5. In terms of biological role, catalyzes the reversible conversion of 2-phosphoglycerate (2-PG) into phosphoenolpyruvate (PEP). It is essential for the degradation of carbohydrates via glycolysis. The chain is Enolase from Sodalis glossinidius (strain morsitans).